A 294-amino-acid chain; its full sequence is Coiled-coil domain-containing protein 69 (294 aa).

The interval 1–43 is disordered; the sequence is MGCGHSRLSCCKPPKKRRQRPDQPPKPEPQELGPLNGDTATTD. Gly-2 carries N-myristoyl glycine lipidation. Positions 20–29 are enriched in basic and acidic residues; sequence RPDQPPKPEP. Residues 47–270 adopt a coiled-coil conformation; it reads ASEEAEQHQK…QEKEELLYRV (224 aa). 2 positions are modified to phosphoserine: Ser-152 and Ser-239.

It belongs to the CCDC69 family.

It localises to the cytoplasm. The protein localises to the cytoskeleton. Its subcellular location is the spindle. The protein resides in the midbody. May act as a scaffold to regulate the recruitment and assembly of spindle midzone components. Required for the localization of AURKB and PLK1 to the spindle midzone. The sequence is that of Coiled-coil domain-containing protein 69 (CCDC69) from Bos taurus (Bovine).